A 352-amino-acid polypeptide reads, in one-letter code: Protein Wnt-3a (352 aa).

Positions 1-18 (MAPLGYFLLLCSLKQALG) are cleaved as a signal peptide. Disulfide bonds link Cys-77–Cys-88, Cys-128–Cys-136, Cys-138–Cys-155, Cys-203–Cys-217, Cys-205–Cys-212, Cys-281–Cys-312, Cys-297–Cys-307, Cys-311–Cys-351, Cys-327–Cys-342, Cys-329–Cys-339, and Cys-334–Cys-335. A glycan (N-linked (GlcNAc...) asparagine) is linked at Asn-87. Ser-209 is lipidated: O-palmitoleoyl serine; by PORCN. N-linked (GlcNAc...) asparagine glycosylation is present at Asn-298.

This sequence belongs to the Wnt family. In terms of assembly, forms a soluble 1:1 complex with AFM; this prevents oligomerization and is required for prolonged biological activity. The complex with AFM may represent the physiological form in body fluids. Homooligomer; disulfide-linked, leading to inactivation. Interacts with PORCN. Interacts with APCDD1 and WLS. Component of the Wnt-Fzd-LRP5-LRP6 signaling complex that contains a WNT protein, a FZD protein and LRP5 or LRP6. Interacts directly in the complex with LRP6. Interacts with glypican GPC3. Interacts with PKD1 (via extracellular domain). Interacts with FZD5. Post-translationally, palmitoleoylation by PORCN is required for efficient binding to frizzled receptors. Palmitoleoylation is required for proper trafficking to cell surface, vacuolar acidification is critical to release palmitoleoylated WNT3A from WLS in secretory vesicles. Depalmitoleoylated by NOTUM, leading to inhibit Wnt signaling pathway, possibly by promoting disulfide bond formation and oligomerization. Proteolytic processing by TIKI1 and TIKI2 promotes oxidation and formation of large disulfide-bond oligomers, leading to inactivation of WNT3A. In terms of processing, disulfide bonds have critical and distinct roles in secretion and activity. Loss of each conserved cysteine in WNT3A results in high molecular weight oxidized Wnt oligomers, which are formed through inter-Wnt disulfide bonding. In terms of tissue distribution, moderately expressed in placenta and at low levels in adult lung, spleen, and prostate.

It is found in the secreted. The protein resides in the extracellular space. It localises to the extracellular matrix. Its function is as follows. Ligand for members of the frizzled family of seven transmembrane receptors. Functions in the canonical Wnt signaling pathway that results in activation of transcription factors of the TCF/LEF family. Required for normal embryonic mesoderm development and formation of caudal somites. Required for normal morphogenesis of the developing neural tube. Mediates self-renewal of the stem cells at the bottom on intestinal crypts (in vitro). The chain is Protein Wnt-3a (WNT3A) from Homo sapiens (Human).